The primary structure comprises 96 residues: uncharacterized protein (96 aa).

Residues 35–96 (SPSGEKRSTK…KKFSSPPHPK (62 aa)) form a disordered region. The span at 38 to 52 (GEKRSTKNQTKENTK) shows a compositional bias: basic and acidic residues. Over residues 69–80 (ANQQTNENSKPL) the composition is skewed to polar residues.

This is an uncharacterized protein from Dictyostelium discoideum (Social amoeba).